Consider the following 329-residue polypeptide: Clavesin-2 (329 aa).

Positions 96–257 (IKQALKDGFP…ELGGMLPPYD (162 aa)) constitute a CRAL-TRIO domain. Residues 293–329 (SPKTMKRSQSVVEPGVLKRPEKVKSEEENMQPLLSLD) form a disordered region. Positions 308 to 319 (VLKRPEKVKSEE) are enriched in basic and acidic residues.

It is found in the golgi apparatus. It localises to the trans-Golgi network membrane. Its subcellular location is the early endosome membrane. The protein localises to the cytoplasmic vesicle. The protein resides in the clathrin-coated vesicle. Functionally, required for normal morphology of late endosomes and/or lysosomes in neurons. Binds phosphatidylinositol 3,5-bisphosphate (PtdIns(3,5)P2). The chain is Clavesin-2 (clvs2) from Danio rerio (Zebrafish).